A 155-amino-acid chain; its full sequence is Ciliary microtubule inner protein 2C (155 aa).

This sequence belongs to the CIMIP2 family.

The protein localises to the cytoplasm. The protein resides in the cytoskeleton. Its subcellular location is the cilium axoneme. In terms of biological role, microtubule inner protein (MIP) part of the dynein-decorated doublet microtubules (DMTs) in cilia axoneme, which is required for motile cilia beating. This chain is Ciliary microtubule inner protein 2C (cimip2c), found in Xenopus tropicalis (Western clawed frog).